The chain runs to 278 residues: Probable cytochrome c oxidase subunit 3 (278 aa).

A run of 6 helical transmembrane segments spans residues proline 21–methionine 41, phenylalanine 46–tryptophan 66, isoleucine 89–phenylalanine 109, cysteine 174–tyrosine 194, phenylalanine 212–valine 232, and alanine 256–phenylalanine 276.

It belongs to the cytochrome c oxidase subunit 3 family.

It localises to the cell membrane. The catalysed reaction is 4 Fe(II)-[cytochrome c] + O2 + 8 H(+)(in) = 4 Fe(III)-[cytochrome c] + 2 H2O + 4 H(+)(out). In Rickettsia felis (strain ATCC VR-1525 / URRWXCal2) (Rickettsia azadi), this protein is Probable cytochrome c oxidase subunit 3 (ctaE).